Here is a 610-residue protein sequence, read N- to C-terminus: Serine/threonine-protein kinase VRK1 (610 aa).

Residues 32–384 (FIVGKQFATG…PRKRTTRKAV (353 aa)) enclose the Protein kinase domain. ATP-binding positions include 38 to 46 (FATGGFGRI) and K61. The active-site Proton acceptor is D167. Disordered regions lie at residues 317–476 (IQKT…NKVA), 498–530 (ISVASDKSPTTSTPSSSSGLRSKRKSSEDVGEG), 544–577 (KKAKTKSGISSATKASPTELRRVPGVRNFPKGRR), and 590–610 (ERLASRQTKPTFDDSSCSSEV). Basic and acidic residues predominate over residues 352-373 (AVKEESDNKDNDEVEVKPEKKA). Residues 388–397 (NDSDDNEEQY) are compositionally biased toward acidic residues. A compositionally biased stretch (low complexity) spans 447 to 458 (TTPSSAASTSRS). Positions 465–474 (LTSSTASSNK) are enriched in polar residues. Residues 502–517 (SDKSPTTSTPSSSSGL) are compositionally biased toward low complexity. Composition is skewed to polar residues over residues 550 to 559 (SGISSATKAS) and 594 to 610 (SRQTKPTFDDSSCSSEV).

It belongs to the protein kinase superfamily. CK1 Ser/Thr protein kinase family. VRK subfamily. Post-translationally, autophosphorylates in vitro. In terms of tissue distribution, present in germ cells at all stages of progression from the mitotic zone to mature oocytes, but not in maturing spermatids (at the protein level). Expressed in the ventral nerve cord and vulva cells.

It is found in the nucleus. Its subcellular location is the cytoplasm. It localises to the cajal body. The enzyme catalyses L-seryl-[protein] + ATP = O-phospho-L-seryl-[protein] + ADP + H(+). It catalyses the reaction L-threonyl-[protein] + ATP = O-phospho-L-threonyl-[protein] + ADP + H(+). Its function is as follows. Serine/threonine kinase that phosphorylates baf-1, thus regulating the association of baf-1 with chromatin and nuclear membrane proteins during nuclear envelope formation. May act through the egl-17 signaling pathway. Essential in hermaphrodites for formation of the vulva, uterus, and uterine seam cells and for development and maintenance of the somatic gonad and thus the germ line. Acts to prevent cep-1 from triggering an inappropriate cell cycle arrest, thereby promoting germ cell proliferation. Regulates anchor cell polarity and the timing of anchor cell invasion through the basement membranes separating vulval and somatic gonadal cells during the L3 larval stage. This Caenorhabditis elegans protein is Serine/threonine-protein kinase VRK1.